The chain runs to 167 residues: Cell division protein SepF (167 aa).

A disordered region spans residues 25-64; it reads EEDVAPVNNSTFQEKKHKKRSAVQRKQKNSDQEGDSVVPL. Over residues 39-51 the composition is skewed to basic residues; that stretch reads KKHKKRSAVQRKQ.

This sequence belongs to the SepF family. As to quaternary structure, homodimer. Interacts with FtsZ.

The protein resides in the cytoplasm. Functionally, cell division protein that is part of the divisome complex and is recruited early to the Z-ring. Probably stimulates Z-ring formation, perhaps through the cross-linking of FtsZ protofilaments. Its function overlaps with FtsA. This chain is Cell division protein SepF, found in Natranaerobius thermophilus (strain ATCC BAA-1301 / DSM 18059 / JW/NM-WN-LF).